The sequence spans 329 residues: Phosphate import ATP-binding protein PstB (329 aa).

In terms of domain architecture, ABC transporter spans 83–325 (FEIENLNFWY…PKQKETNRYI (243 aa)). 116-123 (GKSGCGKS) contributes to the ATP binding site.

The protein belongs to the ABC transporter superfamily. Phosphate importer (TC 3.A.1.7) family. As to quaternary structure, the complex is composed of two ATP-binding proteins (PstB), two transmembrane proteins (PstC and PstA) and a solute-binding protein (PstS).

It localises to the cell membrane. It carries out the reaction phosphate(out) + ATP + H2O = ADP + 2 phosphate(in) + H(+). Part of the ABC transporter complex PstSACB involved in phosphate import. Responsible for energy coupling to the transport system. This Mycoplasma pneumoniae (strain ATCC 29342 / M129 / Subtype 1) (Mycoplasmoides pneumoniae) protein is Phosphate import ATP-binding protein PstB.